A 346-amino-acid chain; its full sequence is MSLCQFVSSISDCRITQALIYGVLFVGVYKITTFTLSVGSLLVDLFVLPAVDFKKYGAKQGKWAVVTGASDGIGKEYAYQLASRGLNVVLISRTLSKLELIATEIETKYKVSTEVIAFDASTDNDANYAKILHTVSNLPVTVLVNNVGQSHSIPVPFLETEDKELRDIITINNTVTLKITQAVAPVIADTVAKENKKVKGLILTMGSFGGLLPTPYLATYSGSKSFLQAWSSALAGELKPQGIDVQLVISYLVTSAMSKIRRSSASIPNPKNFVTSVLNTAGRRCGAQERFATTTPYWTHALMHFGIENTVGVYSKFANSLNFSMHKSIRVRALKKAARANATKTD.

A helical membrane pass occupies residues 19–39 (LIYGVLFVGVYKITTFTLSVG). NADP(+)-binding residues include Val65, Asp119, Asn146, Tyr220, Lys224, Val253, and Ser255. The active-site Proton donor is the Tyr220. Lys224 functions as the Lowers pKa of active site Tyr in the catalytic mechanism.

This sequence belongs to the short-chain dehydrogenases/reductases (SDR) family.

It localises to the endoplasmic reticulum membrane. The enzyme catalyses a very-long-chain (3R)-3-hydroxyacyl-CoA + NADP(+) = a very-long-chain 3-oxoacyl-CoA + NADPH + H(+). The protein operates within lipid metabolism; fatty acid biosynthesis. Its function is as follows. Component of the microsomal membrane bound fatty acid elongation system, which produces the 26-carbon very long-chain fatty acids (VLCFA) from palmitate. Catalyzes the reduction of the 3-ketoacyl-CoA intermediate that is formed in each cycle of fatty acid elongation. VLCFAs serve as precursors for ceramide and sphingolipids. This chain is Very-long-chain 3-oxoacyl-CoA reductase, found in Debaryomyces hansenii (strain ATCC 36239 / CBS 767 / BCRC 21394 / JCM 1990 / NBRC 0083 / IGC 2968) (Yeast).